The chain runs to 115 residues: Ribosome-binding factor A (115 aa).

Belongs to the RbfA family. Monomer. Binds 30S ribosomal subunits, but not 50S ribosomal subunits or 70S ribosomes.

It localises to the cytoplasm. Functionally, one of several proteins that assist in the late maturation steps of the functional core of the 30S ribosomal subunit. Associates with free 30S ribosomal subunits (but not with 30S subunits that are part of 70S ribosomes or polysomes). Required for efficient processing of 16S rRNA. May interact with the 5'-terminal helix region of 16S rRNA. This Bacillus velezensis (strain DSM 23117 / BGSC 10A6 / LMG 26770 / FZB42) (Bacillus amyloliquefaciens subsp. plantarum) protein is Ribosome-binding factor A.